The following is a 445-amino-acid chain: Glutamyl-tRNA(Gln) amidotransferase subunit D (445 aa).

In terms of domain architecture, Asparaginase/glutaminase spans serine 93–asparagine 425. Active-site residues include threonine 103, threonine 179, aspartate 180, and lysine 258.

This sequence belongs to the asparaginase 1 family. GatD subfamily. Heterodimer of GatD and GatE.

It catalyses the reaction L-glutamyl-tRNA(Gln) + L-glutamine + ATP + H2O = L-glutaminyl-tRNA(Gln) + L-glutamate + ADP + phosphate + H(+). Functionally, allows the formation of correctly charged Gln-tRNA(Gln) through the transamidation of misacylated Glu-tRNA(Gln) in organisms which lack glutaminyl-tRNA synthetase. The reaction takes place in the presence of glutamine and ATP through an activated gamma-phospho-Glu-tRNA(Gln). The GatDE system is specific for glutamate and does not act on aspartate. This Saccharolobus islandicus (strain Y.N.15.51 / Yellowstone #2) (Sulfolobus islandicus) protein is Glutamyl-tRNA(Gln) amidotransferase subunit D.